We begin with the raw amino-acid sequence, 377 residues long: Nucleoside diphosphate kinase homolog 7 (377 aa).

The region spanning 3–91 (HSERFVFIAE…YTARQLGSKK (89 aa)) is the DM10 domain.

It belongs to the NDK family. As to quaternary structure, component of sperm flagellar doublet microtubules. Component of the gamma-tubulin ring complex. In terms of tissue distribution, expressed in trachea multiciliated cells.

The protein localises to the cytoplasm. It is found in the cytoskeleton. The protein resides in the microtubule organizing center. Its subcellular location is the centrosome. It localises to the nucleus. The protein localises to the spindle. It is found in the cilium axoneme. The protein resides in the flagellum axoneme. Its subcellular location is the cell projection. It localises to the cilium. Its function is as follows. Possesses an intrinsic kinase activity. Displays 3'-5' exonuclease activity with a preference for single-stranded DNA. Does not seem to have nucleoside diphosphate kinase activity. Functional component of the gamma-tubulin ring complex, implicated in the regulation of the microtubule-nucleating activity of the gamma-tubulin ring complex in centrosomes, in a kinase activity-dependent manner. Part of the dynein-decorated doublet microtubules (DMTs) in cilia axoneme, which is required for motile cilia beating. This chain is Nucleoside diphosphate kinase homolog 7 (NME7), found in Bos taurus (Bovine).